The sequence spans 272 residues: Alkaline ceramidase (272 aa).

A run of 2 helical transmembrane segments spans residues 34–54 and 61–81; these read FANT…IMLL and VNGG…ASTY. His83 serves as a coordination point for Zn(2+). Transmembrane regions (helical) follow at residues 96-116, 124-144, 148-168, and 183-203; these read LSLV…MKWF, LTLV…LCFL, LNAI…NYEG, and ILAL…LCDF. Zn(2+) is bound by residues His213 and His217. The helical transmembrane segment at 214–234 threads the bilayer; that stretch reads ALFHLLAGLAGYTIFIMFSMI. N-linked (GlcNAc...) asparagine glycosylation is present at Asn256.

The protein belongs to the alkaline ceramidase family. Zn(2+) is required as a cofactor.

It is found in the membrane. The catalysed reaction is an N-acyl-sphingoid base + H2O = a sphingoid base + a fatty acid. It catalyses the reaction an N-acylsphing-4-enine + H2O = sphing-4-enine + a fatty acid. It carries out the reaction an N-acyl-15-methylhexadecasphing-4-enine + H2O = 15-methylhexadecasphing-4-enine + a fatty acid. Its pathway is lipid metabolism; sphingolipid metabolism. Hydrolyzes the sphingolipid ceramide into sphingoid base and free fatty acid. C.elegans contain specific sphingoid bases, which are unique or different in structure compared to the sphingoid bases found in other animals. Two examples of these distinctive compounds are: 15-methylhexadecasphinganine and 15-methylhexadecasphing-4-enine. In Caenorhabditis elegans, this protein is Alkaline ceramidase.